A 389-amino-acid polypeptide reads, in one-letter code: Teichoic acid glycerol-phosphate transferase (389 aa).

The protein belongs to the CDP-glycerol glycerophosphotransferase family.

The protein resides in the cell membrane. It carries out the reaction 4-O-[(2R)-glycerylphospho]-N-acetyl-beta-D-mannosaminyl-(1-&gt;4)-N-acetyl-alpha-D-glucosaminyl di-trans,octa-cis-undecaprenyl diphosphate + CDP-glycerol = 4-O-[di(2R)-glycerylphospho]-N-acetyl-beta-D-mannosaminyl-(1-&gt;4)-N-acetyl-alpha-D-glucosaminyl di-trans,octa-cis-undecaprenyl diphosphate + CMP + H(+). Its pathway is cell wall biogenesis; poly(ribitol phosphate) teichoic acid biosynthesis. In terms of biological role, catalyzes the addition of a second glycerol phosphate unit from CDP-glycerol to the prenolpyrophosphate-linked disaccharide, to complete the linkage unit. The chain is Teichoic acid glycerol-phosphate transferase (tarF) from Staphylococcus aureus (strain NCTC 8325 / PS 47).